The chain runs to 322 residues: MEQVPIKEMRLSDLRPNNKSIDTDLGGTKLVVIGKPGSGKSTLIKALLDSKRHIIPCAVVISGSEEANGFYKGVVPDLFIYHQFSPSIIDRIHRRQVKAKAEMGSKKSWLLVVIDDCMDNAKMFNDKEVRALFKNGRHWNVLVVIANQYVMDLTPDLRSSVDGVFLFRENNVTYRDKTYANFASVVPKKLYPTVMETVCQNYRCMFIDNTKATDNWHDSVFWYKAPYSKSAVAPFGARSYWKYACSKTGEEMPAVFDNVKILGDLLLKELPEAGEALVTYGGKDGPSDNEDGPSDDEDGPSDDEEGLSKDGVSEYYQSDLDD.

A disordered region spans residues 277–322; sequence LVTYGGKDGPSDNEDGPSDDEDGPSDDEEGLSKDGVSEYYQSDLDD. Over residues 287-305 the composition is skewed to acidic residues; sequence SDNEDGPSDDEDGPSDDEE.

This is an uncharacterized protein from Frog virus 3 (isolate Goorha) (FV-3).